Reading from the N-terminus, the 855-residue chain is Beta-mannosidase B (855 aa).

Asn-98 is a glycosylation site (N-linked (GlcNAc...) asparagine). Glu-430 serves as the catalytic Proton donor. N-linked (GlcNAc...) asparagine glycans are attached at residues Asn-693 and Asn-730.

It belongs to the glycosyl hydrolase 2 family. Beta-mannosidase B subfamily. Homodimer.

It is found in the secreted. The catalysed reaction is Hydrolysis of terminal, non-reducing beta-D-mannose residues in beta-D-mannosides.. It participates in glycan metabolism; N-glycan degradation. In terms of biological role, exoglycosidase that cleaves the single beta-linked mannose residue from the non-reducing end of beta-mannosidic oligosaccharides of various complexity and length. Prefers mannobiose over mannotriose. Is also severely restricted by galactosyl substitutions at the +1 subsite. Has no activity against polymeric mannan. This chain is Beta-mannosidase B (man9), found in Thermothelomyces thermophilus (Myceliophthora thermophila).